Here is a 117-residue protein sequence, read N- to C-terminus: Holo-[acyl-carrier-protein] synthase (117 aa).

Mg(2+) is bound by residues Asp-8 and Glu-58.

The protein belongs to the P-Pant transferase superfamily. AcpS family. Mg(2+) is required as a cofactor.

Its subcellular location is the cytoplasm. The enzyme catalyses apo-[ACP] + CoA = holo-[ACP] + adenosine 3',5'-bisphosphate + H(+). Transfers the 4'-phosphopantetheine moiety from coenzyme A to a Ser of acyl-carrier-protein. This Staphylococcus epidermidis (strain ATCC 35984 / DSM 28319 / BCRC 17069 / CCUG 31568 / BM 3577 / RP62A) protein is Holo-[acyl-carrier-protein] synthase.